Here is a 522-residue protein sequence, read N- to C-terminus: Anthranilate synthase component 1 (522 aa).

L-tryptophan is bound by residues S40 and 292–294; that span reads PYM. Residue 329–330 participates in chorismate binding; it reads GT. E362 lines the Mg(2+) pocket. Residues Y450, R470, 484–486, and G486 each bind chorismate; that span reads GAG. A Mg(2+)-binding site is contributed by E499.

This sequence belongs to the anthranilate synthase component I family. In terms of assembly, heterotetramer consisting of two non-identical subunits: a beta subunit (TrpG) and a large alpha subunit (TrpE). Mg(2+) is required as a cofactor.

The catalysed reaction is chorismate + L-glutamine = anthranilate + pyruvate + L-glutamate + H(+). Its pathway is amino-acid biosynthesis; L-tryptophan biosynthesis; L-tryptophan from chorismate: step 1/5. Its activity is regulated as follows. Feedback inhibited by tryptophan. Part of a heterotetrameric complex that catalyzes the two-step biosynthesis of anthranilate, an intermediate in the biosynthesis of L-tryptophan. In the first step, the glutamine-binding beta subunit (TrpG) of anthranilate synthase (AS) provides the glutamine amidotransferase activity which generates ammonia as a substrate that, along with chorismate, is used in the second step, catalyzed by the large alpha subunit of AS (TrpE) to produce anthranilate. In the absence of TrpG, TrpE can synthesize anthranilate directly from chorismate and high concentrations of ammonia. This Buchnera aphidicola subsp. Baizongia pistaciae (strain Bp) protein is Anthranilate synthase component 1 (trpE).